Reading from the N-terminus, the 177-residue chain is MLRWFLSHLLGVWLLLSQLPREIPATDDKKLKACGRDYVRLQIEVCGSIWWGRKAGQLRERRQISEPLAEVVPSSIINDPEILSLMLQSIPGMPQELRIATRSGKEKLLRELHFVLEDSNLNLEEMKKTFLNTQFEAEDKSLSKLDKHPRKKRDNYIKMSDKCCNVGCTRRELASRC.

The N-terminal stretch at 1–25 (MLRWFLSHLLGVWLLLSQLPREIPA) is a signal peptide. 3 disulfide bridges follow: Cys34–Cys164, Cys46–Cys177, and Cys163–Cys168. Positions 63 to 149 (QISEPLAEVV…KSLSKLDKHP (87 aa)) are cleaved as a propeptide — connecting peptide.

This sequence belongs to the insulin family. Heterodimer of a B chain and an A chain linked by two disulfide bonds. Placenta; syncytiotrophoblast.

Its subcellular location is the secreted. In terms of biological role, relaxin is an ovarian hormone that acts with estrogen to produce dilatation of the birth canal in many mammals. The protein is Prorelaxin (RLN) of Canis lupus familiaris (Dog).